The following is a 326-amino-acid chain: NAD kinase (326 aa).

The Proton acceptor role is filled by D93. Residues 93 to 94, R98, 171 to 172, R182, D201, and 212 to 217 contribute to the NAD(+) site; these read DG, NE, and TAHAFS.

It belongs to the NAD kinase family. Requires a divalent metal cation as cofactor.

It is found in the cytoplasm. It carries out the reaction NAD(+) + ATP = ADP + NADP(+) + H(+). Functionally, involved in the regulation of the intracellular balance of NAD and NADP, and is a key enzyme in the biosynthesis of NADP. Catalyzes specifically the phosphorylation on 2'-hydroxyl of the adenosine moiety of NAD to yield NADP. This chain is NAD kinase, found in Thermobifida fusca (strain YX).